The chain runs to 496 residues: Anaerobic nitric oxide reductase flavorubredoxin (496 aa).

The tract at residues 30–210 is zinc metallo-hydrolase; the sequence is TKGTSYNSYL…PFSALVTAKI (181 aa). Positions 79, 81, 83, 147, 166, and 227 each coordinate Fe cation. Residues 254-393 enclose the Flavodoxin-like domain; that stretch reads ITIFYDSMSN…LCREHGQFIA (140 aa). FMN-binding positions include 260-264 and 342-369; these read SMSNN and AFGS…ETAV. A Rubredoxin-like domain is found at 444–495; that stretch reads KQCMLCSVCNWVYDPEIGEPNQGVEPNTPWSSVPNDFLCPECHLGKDVFVEI. Residues C449, C452, C482, and C485 each coordinate Fe cation.

The protein in the N-terminal section; belongs to the zinc metallo-hydrolase group 3 family. Homotetramer. Requires Fe cation as cofactor. FMN serves as cofactor.

Its subcellular location is the cytoplasm. It functions in the pathway nitrogen metabolism; nitric oxide reduction. Functionally, anaerobic nitric oxide reductase; uses NADH to detoxify nitric oxide (NO), protecting several 4Fe-4S NO-sensitive enzymes. Has at least 2 reductase partners, only one of which (NorW, flavorubredoxin reductase) has been identified. NO probably binds to the di-iron center; electrons enter from the NorW at rubredoxin and are transferred sequentially to the FMN center and the di-iron center. Also able to function as an aerobic oxygen reductase. The protein is Anaerobic nitric oxide reductase flavorubredoxin of Aliivibrio fischeri (strain ATCC 700601 / ES114) (Vibrio fischeri).